The sequence spans 599 residues: mRNA export factor MEX67 (599 aa).

Ser2 carries the N-acetylserine modification. LRR repeat units lie at residues 163 to 184 (IVESVNLADNQLKDISAISTLA) and 189 to 210 (NLKNLCLANNQIFRFRSLEVWK). An LRRCT domain is found at 224-262 (NPITTDKLYRTEMLRLFPKLVVLDNVIVRDEQKLQTVYS). Residues 280 to 467 (SSTDFATNFL…VIIASDLLTV (188 aa)) form the NTF2 domain. Residues 408 to 439 (KPELESNKKTGKNNYQKNRRYNHGYNSTSNNK) are disordered. The TAP-C domain occupies 546 to 599 (PVQLELLNKLHLETKLNAEYTFMLAEQSNWNYEVAIKGFQSSMNGIPREAFVQF).

This sequence belongs to the NXF family. Interacts with nucleoporin complex NUP84 and MTR2. Interacts with MIP6.

It localises to the nucleus. The protein resides in the cytoplasm. Its function is as follows. Involved in the export of mRNA from the nucleus to the cytoplasm. The chain is mRNA export factor MEX67 (MEX67) from Saccharomyces cerevisiae (strain ATCC 204508 / S288c) (Baker's yeast).